The following is a 193-amino-acid chain: Putative deoxynucleotide monophosphate kinase (193 aa).

Lys-10 contributes to the dGMP binding site. 2 residues coordinate ATP: Gly-13 and Thr-16. The dGMP site is built by Leu-36, Lys-37, Lys-58, Asp-122, Arg-124, Glu-128, and Ser-155.

This sequence belongs to the dNMP kinase family.

The catalysed reaction is a 2'-deoxyribonucleoside 5'-phosphate + ATP = a 2'-deoxyribonucleoside 5'-diphosphate + ADP. This is Putative deoxynucleotide monophosphate kinase from Acanthamoeba polyphaga mimivirus (APMV).